We begin with the raw amino-acid sequence, 224 residues long: 7-cyano-7-deazaguanine synthase (224 aa).

9 to 19 (LSGGLDSATVL) provides a ligand contact to ATP. Zn(2+) contacts are provided by cysteine 189, cysteine 199, cysteine 202, and cysteine 205.

It belongs to the QueC family. Zn(2+) serves as cofactor.

It catalyses the reaction 7-carboxy-7-deazaguanine + NH4(+) + ATP = 7-cyano-7-deazaguanine + ADP + phosphate + H2O + H(+). Its pathway is purine metabolism; 7-cyano-7-deazaguanine biosynthesis. Functionally, catalyzes the ATP-dependent conversion of 7-carboxy-7-deazaguanine (CDG) to 7-cyano-7-deazaguanine (preQ(0)). The sequence is that of 7-cyano-7-deazaguanine synthase from Ralstonia pickettii (strain 12J).